The sequence spans 398 residues: 1-deoxy-D-xylulose 5-phosphate reductoisomerase (398 aa).

Positions 11, 12, 13, 14, 38, 39, and 125 each coordinate NADPH. K126 contacts 1-deoxy-D-xylulose 5-phosphate. E127 is a binding site for NADPH. A Mn(2+)-binding site is contributed by D151. 1-deoxy-D-xylulose 5-phosphate is bound by residues S152, E153, S179, and H202. Residue E153 coordinates Mn(2+). Residue G208 coordinates NADPH. 1-deoxy-D-xylulose 5-phosphate contacts are provided by S215, N220, K221, and E224. E224 contributes to the Mn(2+) binding site.

This sequence belongs to the DXR family. Requires Mg(2+) as cofactor. It depends on Mn(2+) as a cofactor.

The enzyme catalyses 2-C-methyl-D-erythritol 4-phosphate + NADP(+) = 1-deoxy-D-xylulose 5-phosphate + NADPH + H(+). Its pathway is isoprenoid biosynthesis; isopentenyl diphosphate biosynthesis via DXP pathway; isopentenyl diphosphate from 1-deoxy-D-xylulose 5-phosphate: step 1/6. Functionally, catalyzes the NADPH-dependent rearrangement and reduction of 1-deoxy-D-xylulose-5-phosphate (DXP) to 2-C-methyl-D-erythritol 4-phosphate (MEP). This chain is 1-deoxy-D-xylulose 5-phosphate reductoisomerase, found in Burkholderia pseudomallei (strain 1106a).